We begin with the raw amino-acid sequence, 1585 residues long: Sterol 3-beta-glucosyltransferase (1585 aa).

Residues 1–18 (MSPPISPTPPPLQPPFPP) are compositionally biased toward pro residues. Disordered regions lie at residues 1–154 (MSPP…CDFR), 177–225 (PWEE…PTHT), and 249–279 (YQYATPETSSRRTSAAGSESSSEGEVPLPKG). Composition is skewed to polar residues over residues 65-77 (DQATNSSNDSLIP), 105-123 (DAQTVRFSSSSPASYSTHE), and 132-148 (PRTSSRAPNTASSQMAE). A compositionally biased stretch (acidic residues) spans 178–194 (WEEDDDSDDGEDDDEFI). Over residues 255–273 (ETSSRRTSAAGSESSSEGE) the composition is skewed to low complexity. The GRAM 1 domain occupies 387 to 555 (ERLMEVFGLE…EAIVDVEKSP (169 aa)). The PH domain maps to 438-530 (LLVKSGPLHK…WVKAIQKVMF (93 aa)). Disordered regions lie at residues 625–645 (TSHATIKRHGTDSSAEKLGMA) and 666–852 (DGEP…GSES). Positions 670–689 (LEEHSQGPHHNDEDASHLPH) are enriched in basic and acidic residues. 3 stretches are compositionally biased toward polar residues: residues 760–785 (TDSSTTVTESGPSLRSRTGRTKQASV), 806–817 (NKPSVVDSNSAE), and 827–840 (SWTSETSSGSQMVK). The 72-residue stretch at 862-933 (RKFRTFFALS…RDLYGLKAQK (72 aa)) folds into the GRAM 2 domain. Residues S1043, R1044, D1046, I1358, H1360, H1373, G1377, T1378, D1397, and Q1398 each coordinate UDP-alpha-D-glucose. The interval 1499-1555 (NRVRSRSRSRSRSSQGRFSPRRHTVDDDGWSVVSGGSRSRSGSASAVTSPERRPLNI) is disordered. The span at 1529–1545 (SVVSGGSRSRSGSASAV) shows a compositional bias: low complexity.

The protein belongs to the glycosyltransferase 28 family.

It localises to the cytoplasm. The protein resides in the membrane. The enzyme catalyses a sterol + UDP-alpha-D-glucose = a sterol 3-beta-D-glucoside + UDP + H(+). The catalysed reaction is ergosterol + UDP-alpha-D-glucose = ergosteryl 3-beta-D-glucoside + UDP + H(+). In terms of biological role, sterol glycosyltransferase responsible for the glycosylation of ergosterol to form ergosterol-glucoside. The polypeptide is Sterol 3-beta-glucosyltransferase (Cryptococcus neoformans var. neoformans serotype D (strain JEC21 / ATCC MYA-565) (Filobasidiella neoformans)).